A 270-amino-acid chain; its full sequence is ParA family protein MPN_688 (270 aa).

It belongs to the ParA family.

The protein is ParA family protein MPN_688 of Mycoplasma pneumoniae (strain ATCC 29342 / M129 / Subtype 1) (Mycoplasmoides pneumoniae).